We begin with the raw amino-acid sequence, 153 residues long: Pheromone-binding protein Gp-9 (153 aa).

The N-terminal stretch at 1 to 19 (MKTFVLHIFIFALVAFASA) is a signal peptide. 3 disulfides stabilise this stretch: C37–C77, C73–C129, and C118–C138.

Belongs to the PBP/GOBP family. In terms of assembly, homodimer.

It is found in the secreted. Functionally, colony queen number, a major feature of social organization, is associated with worker genotype for Gp-9. Colonies are headed by either a single reproductive queen (monogyne form) or multiple queens (polygyne form). Differences in worker Gp-9 genotypes between social forms may cause differences in workers' abilities to recognize queens and regulate their numbers. The protein is Pheromone-binding protein Gp-9 of Solenopsis saevissima (Fire ant).